The following is a 398-amino-acid chain: Flavin-containing monooxygenase ustF1 (398 aa).

Positions 1–22 are cleaved as a signal peptide; that stretch reads MTVSQVRRVAVIGAGISGVVST. 13-18 provides a ligand contact to FAD; sequence GAGISG. Residues Asn53, Asn57, Asn119, and Asn126 are each glycosylated (N-linked (GlcNAc...) asparagine). Residue 194 to 199 coordinates NADP(+); it reads GGGVSS. N-linked (GlcNAc...) asparagine glycans are attached at residues Asn236, Asn243, and Asn271.

This sequence belongs to the FMO family.

It functions in the pathway mycotoxin biosynthesis. Flavin-containing monooxygenase; part of the gene cluster that mediates the biosynthesis of the secondary metabolite ustiloxin B, an antimitotic tetrapeptide. First, ustA is processed by the subtilisin-like endoprotease Kex2 that is outside the ustiloxin B gene cluster, at the C-terminal side of Arg-Lys, after transfer to Golgi apparatus through the endoplasmic reticulum (ER). Cleavage by KEX2 generates 16 peptides YAIG-I to YAIG-XVI. To process the precursor peptide further, at least two peptidases are necessary to cleave the N-terminal and C-terminal sides of the Tyr-Ala-Ile-Gly core peptide which serves as backbone for the synthesis of ustiloxin B, through cyclization and modification of the tyrosine with a non-protein coding amino acid, norvaline. One of the two peptidases must be the serine peptidase ustP; and the other pepdidase is probably ustH. Macrocyclization of the core peptide derived from ustA requires the tyrosinase ustQ, as well as the homologous oxidases ustYa and ustYb, and leads to the production of the first cyclization product N-desmethylustiloxin F. For the formation of N-desmethylustiloxin F, three oxidation steps are required, hydroxylation at the benzylic position, hydroxylation at either the aromatic ring of Tyr or beta-position of Ile, and oxidative cyclization. UstQ may catalyze the oxidation of a phenol moiety, whereas the ustYa and ustYb are most likely responsible for the remaining two-step oxidations. N-desmethylustiloxin F is then methylated by ustM to yield ustiloxin F which in turn substrate of the cytochrome P450 monooxygenase ustC which catalyzes the formation of S-deoxyustiloxin H. The flavoprotein monooxygenases ustF1 and ustF2 then participate in the modification of the side chain of S-deoxyustiloxin H, leading to the synthesis of an oxime intermediate, via ustiloxin H. Finally, carboxylative dehydration performed by the cysteine desulfurase-like protein ustD yields ustiloxin B. The sequence is that of Flavin-containing monooxygenase ustF1 from Aspergillus flavus (strain ATCC 200026 / FGSC A1120 / IAM 13836 / NRRL 3357 / JCM 12722 / SRRC 167).